A 482-amino-acid chain; its full sequence is 2-succinylbenzoate--CoA ligase (482 aa).

It belongs to the ATP-dependent AMP-binding enzyme family. MenE subfamily.

The enzyme catalyses 2-succinylbenzoate + ATP + CoA = 2-succinylbenzoyl-CoA + AMP + diphosphate. It functions in the pathway quinol/quinone metabolism; 1,4-dihydroxy-2-naphthoate biosynthesis; 1,4-dihydroxy-2-naphthoate from chorismate: step 5/7. The protein operates within quinol/quinone metabolism; menaquinone biosynthesis. In terms of biological role, converts 2-succinylbenzoate (OSB) to 2-succinylbenzoyl-CoA (OSB-CoA). The polypeptide is 2-succinylbenzoate--CoA ligase (Bacillus cereus (strain AH820)).